Reading from the N-terminus, the 327-residue chain is Pectate lyase A (327 aa).

An N-terminal signal peptide occupies residues 1 to 19 (MQNLKFLIAAVSCLGPALA). The N-linked (GlcNAc...) asparagine glycan is linked to Asn-99. 3 residues coordinate Ca(2+): Asp-140, Asp-169, and Asp-173. The active site involves Arg-226.

It belongs to the polysaccharide lyase 1 family. The cofactor is Ca(2+).

The protein localises to the secreted. It catalyses the reaction Eliminative cleavage of (1-&gt;4)-alpha-D-galacturonan to give oligosaccharides with 4-deoxy-alpha-D-galact-4-enuronosyl groups at their non-reducing ends.. In terms of biological role, pectinolytic enzyme consist of four classes of enzymes: pectin lyase, polygalacturonase, pectin methylesterase and rhamnogalacturonase. Among pectinolytic enzymes, pectin lyase is the most important in depolymerization of pectin, since it cleaves internal glycosidic bonds of highly methylated pectins. Favors pectate, the anion, over pectin, the methyl ester. This Emericella nidulans (strain FGSC A4 / ATCC 38163 / CBS 112.46 / NRRL 194 / M139) (Aspergillus nidulans) protein is Pectate lyase A (plyA).